A 297-amino-acid chain; its full sequence is 4-hydroxy-tetrahydrodipicolinate synthase (297 aa).

Pyruvate is bound at residue Thr-45. Tyr-133 acts as the Proton donor/acceptor in catalysis. Lys-161 (schiff-base intermediate with substrate) is an active-site residue. Residue Ile-205 participates in pyruvate binding.

This sequence belongs to the DapA family. In terms of assembly, homotetramer; dimer of dimers.

Its subcellular location is the cytoplasm. It carries out the reaction L-aspartate 4-semialdehyde + pyruvate = (2S,4S)-4-hydroxy-2,3,4,5-tetrahydrodipicolinate + H2O + H(+). The protein operates within amino-acid biosynthesis; L-lysine biosynthesis via DAP pathway; (S)-tetrahydrodipicolinate from L-aspartate: step 3/4. Functionally, catalyzes the condensation of (S)-aspartate-beta-semialdehyde [(S)-ASA] and pyruvate to 4-hydroxy-tetrahydrodipicolinate (HTPA). The sequence is that of 4-hydroxy-tetrahydrodipicolinate synthase from Dichelobacter nodosus (strain VCS1703A).